The sequence spans 262 residues: NADPH-dependent 7-cyano-7-deazaguanine reductase (262 aa).

69–71 (IES) provides a ligand contact to substrate. Position 71–72 (71–72 (SK)) interacts with NADPH. The active-site Thioimide intermediate is the Cys170. Asp177 serves as the catalytic Proton donor. A substrate-binding site is contributed by 209–210 (HE). NADPH is bound at residue 238 to 239 (RG).

Belongs to the GTP cyclohydrolase I family. QueF type 2 subfamily. Homodimer.

It localises to the cytoplasm. It carries out the reaction 7-aminomethyl-7-carbaguanine + 2 NADP(+) = 7-cyano-7-deazaguanine + 2 NADPH + 3 H(+). It functions in the pathway tRNA modification; tRNA-queuosine biosynthesis. In terms of biological role, catalyzes the NADPH-dependent reduction of 7-cyano-7-deazaguanine (preQ0) to 7-aminomethyl-7-deazaguanine (preQ1). The sequence is that of NADPH-dependent 7-cyano-7-deazaguanine reductase from Buchnera aphidicola subsp. Schizaphis graminum (strain Sg).